A 504-amino-acid polypeptide reads, in one-letter code: MQLFIILSLAFIAAWVVYSRWSEYSRGRQGGSGGLPPGPPRLPIIGNILQLGRDPHKSLAQLAKTYGPLMSLKLGNQFAVVVSSPEMAREILQKQGLIFSKPFTPSAVRVLGHNDISMNMLPASSDRWKKLRRVAREQLFSNPALQATQDIRQERLRQLTDYASRCCAQGRAMNVGEATFTTMTNLMFATLFSVELTQYGATDTGSDKKFKEHVNALTRYMGVPNVADFFPFLAPLDPQGMRRKLTYHLGSLLELVQSLIQQRLQARNDSTYQKKNDFLDTLLDLSEGNEYDLSIKEIKHMFVDLIIAGSDTSAATTEWAMVELLLHPDKMAKLKAELKSVLGEKSIVEESDISRLPYLLATVKEVLRYHPAAPLLAPHAAEEETQVSGYIIPKNTKMFINVWSITRDPSIWKNPESFEPERFLDSEIDFGGQHFELIPFGSGRRICPGMPLASRMLQCMVATLCHNFDWELEKGAESKQLQREDVFGLALQKKIPLRAVPIKV.

The helical transmembrane segment at 4 to 24 threads the bilayer; it reads FIILSLAFIAAWVVYSRWSEY. Position 447 (Cys-447) interacts with heme.

Belongs to the cytochrome P450 family. Heme serves as cofactor. As to expression, expressed in glandular trichomes of young leaves.

It is found in the membrane. It carries out the reaction 11-hydroxyferruginol + 3 reduced [NADPH--hemoprotein reductase] + 3 O2 = carnosate + 3 oxidized [NADPH--hemoprotein reductase] + 4 H2O + 4 H(+). The enzyme catalyses miltiradiene + 2 reduced [NADPH--hemoprotein reductase] + 2 O2 = miltiradien-20-al + 2 oxidized [NADPH--hemoprotein reductase] + 3 H2O + 2 H(+). It catalyses the reaction ferruginol + 3 reduced [NADPH--hemoprotein reductase] + 3 O2 = pisiferate + 3 oxidized [NADPH--hemoprotein reductase] + 4 H2O + 4 H(+). It participates in secondary metabolite biosynthesis; terpenoid biosynthesis. Functionally, monooxygenase involved in the biosynthesis of carnosate, a potent antioxidant labdane-related diterpene natural products. Catalyzes the oxidation of 11-hydroxyferruginol to produce carnosate. Mediates the conversion of miltiradien into miltiradien-20-al. Also involved in the production of pisiferic acid and derivative products from ferruginol. This chain is Carnosic acid synthase, found in Rosmarinus officinalis (Rosemary).